The following is a 192-amino-acid chain: MDIKLVVGLGNPGKEYEKTRHNVGFMVIDELVKALRAKGPFEEALSHVYKARIGGKEVILAKPMTYMNNSGAAVYNLLEEYKLSPEQMIVVYDDLDLPLGHMRLRLKGSSGGHRGVESIIKYIGTQNFPRLRIGIGRPKKKEDVVKYVLSPFSPEEEKVISQVIKKAVRCLMRAIEISPEHAMEYCNRQDLI.

Tyr16 is a tRNA binding site. The Proton acceptor role is filled by His21. Tyr66 and Asn68 together coordinate tRNA.

The protein belongs to the PTH family. As to quaternary structure, monomer.

It is found in the cytoplasm. It catalyses the reaction an N-acyl-L-alpha-aminoacyl-tRNA + H2O = an N-acyl-L-amino acid + a tRNA + H(+). Functionally, hydrolyzes ribosome-free peptidyl-tRNAs (with 1 or more amino acids incorporated), which drop off the ribosome during protein synthesis, or as a result of ribosome stalling. In terms of biological role, catalyzes the release of premature peptidyl moieties from peptidyl-tRNA molecules trapped in stalled 50S ribosomal subunits, and thus maintains levels of free tRNAs and 50S ribosomes. This Aquifex aeolicus (strain VF5) protein is Peptidyl-tRNA hydrolase.